The primary structure comprises 288 residues: Diaminopimelate epimerase (288 aa).

Substrate-binding residues include asparagine 13, glutamine 46, and asparagine 66. Catalysis depends on cysteine 75, which acts as the Proton donor. Residues 76–77 (GN), asparagine 166, asparagine 199, and 217–218 (ER) each bind substrate. Residue cysteine 226 is the Proton acceptor of the active site. 227-228 (GT) provides a ligand contact to substrate.

It belongs to the diaminopimelate epimerase family. In terms of assembly, homodimer.

The protein localises to the cytoplasm. It catalyses the reaction (2S,6S)-2,6-diaminopimelate = meso-2,6-diaminopimelate. Its pathway is amino-acid biosynthesis; L-lysine biosynthesis via DAP pathway; DL-2,6-diaminopimelate from LL-2,6-diaminopimelate: step 1/1. Functionally, catalyzes the stereoinversion of LL-2,6-diaminopimelate (L,L-DAP) to meso-diaminopimelate (meso-DAP), a precursor of L-lysine and an essential component of the bacterial peptidoglycan. This Cupriavidus metallidurans (strain ATCC 43123 / DSM 2839 / NBRC 102507 / CH34) (Ralstonia metallidurans) protein is Diaminopimelate epimerase.